The sequence spans 370 residues: Cobalt-precorrin-5B C(1)-methyltransferase (370 aa).

Belongs to the CbiD family.

The catalysed reaction is Co-precorrin-5B + S-adenosyl-L-methionine = Co-precorrin-6A + S-adenosyl-L-homocysteine. It participates in cofactor biosynthesis; adenosylcobalamin biosynthesis; cob(II)yrinate a,c-diamide from sirohydrochlorin (anaerobic route): step 6/10. Catalyzes the methylation of C-1 in cobalt-precorrin-5B to form cobalt-precorrin-6A. The sequence is that of Cobalt-precorrin-5B C(1)-methyltransferase from Trichormus variabilis (strain ATCC 29413 / PCC 7937) (Anabaena variabilis).